The sequence spans 478 residues: Ribosomal RNA small subunit methyltransferase F (478 aa).

Residues 121–127 (ASAPGSK), E145, D172, and D190 each bind S-adenosyl-L-methionine. C243 acts as the Nucleophile in catalysis.

The protein belongs to the class I-like SAM-binding methyltransferase superfamily. RsmB/NOP family.

The protein resides in the cytoplasm. The enzyme catalyses cytidine(1407) in 16S rRNA + S-adenosyl-L-methionine = 5-methylcytidine(1407) in 16S rRNA + S-adenosyl-L-homocysteine + H(+). Its function is as follows. Specifically methylates the cytosine at position 1407 (m5C1407) of 16S rRNA. This is Ribosomal RNA small subunit methyltransferase F from Shewanella sediminis (strain HAW-EB3).